The chain runs to 354 residues: Guanine nucleotide-binding protein G(i) subunit alpha-1 (354 aa).

Gly-2 carries the N-myristoyl glycine lipid modification. Cys-3 carries S-palmitoyl cysteine lipidation. The region spanning 32–354 (REVKLLLLGA…KNNLKDCGLF (323 aa)) is the G-alpha domain. The G1 motif stretch occupies residues 35 to 48 (KLLLLGAGESGKST). Residues 43–48 (ESGKST), 150–151 (DS), and 175–178 (LRTR) each bind GTP. Position 47 (Ser-47) interacts with Mg(2+). The interval 173–181 (DVLRTRVKT) is G2 motif. Thr-181 provides a ligand contact to Mg(2+). Residues 196-205 (FKMFDVGGQR) form a G3 motif region. GTP-binding positions include 200 to 204 (DVGGQ), 269 to 272 (NKKD), and Ala-326. The tract at residues 265–272 (ILFLNKKD) is G4 motif. The G5 motif stretch occupies residues 324-329 (TCATDT).

The protein belongs to the G-alpha family. G(i/o/t/z) subfamily. As to quaternary structure, heterotrimeric G proteins are composed of 3 units; alpha, beta and gamma. The alpha chain contains the guanine nucleotide binding site. Part of a spindle orientation complex at least composed of GNAI1, GPSM2 and NUMA1. Identified in complex with the beta subunit GNB1 and the gamma subunit GNG1. Identified in complex with the beta subunit GNB1 and the gamma subunit GNG2. Component of the TAS2R14-GNAI1 complex, consisting of TAS2R14, GNAI1, GNB1 and GNG2; within the complex interacts with TAS2R14; this complex plays a role in the perception of bitterness. GTP binding causes dissociation of the heterotrimer, liberating the individual subunits so that they can interact with downstream effector proteins. Interacts (GDP-bound form) with GPSM1; this inhibits guanine nucleotide exchange and GTP binding. Interacts (GDP-bound form) with GPSM2 (via GoLoco domains); this inhibits guanine nucleotide exchange. Interacts with RGS10; this strongly enhances GTP hydrolysis. Interacts with RGS1 and RGS16; this strongly enhances GTPase activity. Interacts with RGS4. Interacts with RGS12. Interacts (via active GTP- or inactive GDP-bound forms) with RGS14 (via RGS and GoLoco domains). Interacts with RGS3, RGS6, RGS7, RGS8, RGS17, RGS18 and RGS20 (in vitro). Interacts (GDP-bound form) with RIC8A (via C-terminus); promoting GNAI1 folding and association with the plasma membrane. Interacts (inactive GDP-bound form) with NUCB1 (via GBA motif); the interaction leads to activation of GNAI1. Interacts (inactive GDP-bound form) with CCDC88C/DAPLE (via GBA motif); the interaction leads to activation of GNAI1. Interacts (inactive GDP-bound form) with CCDC8A/GIV (via GBA motif). Myristoylation at Gly-2 is required for membrane anchoring before palmitoylation. Post-translationally, palmitoylation at Cys-3 varies with membrane lipid composition.

The protein resides in the nucleus. The protein localises to the cytoplasm. It is found in the cell membrane. It localises to the cytoskeleton. Its subcellular location is the microtubule organizing center. The protein resides in the centrosome. The protein localises to the cell cortex. It is found in the membrane. It catalyses the reaction GTP + H2O = GDP + phosphate + H(+). Functionally, guanine nucleotide-binding proteins (G proteins) function as transducers downstream of G protein-coupled receptors (GPCRs) in numerous signaling cascades. The alpha chain contains the guanine nucleotide binding site and alternates between an active, GTP-bound state and an inactive, GDP-bound state. Signaling by an activated GPCR promotes GDP release and GTP binding. The alpha subunit has a low GTPase activity that converts bound GTP to GDP, thereby terminating the signal. Both GDP release and GTP hydrolysis are modulated by numerous regulatory proteins. Signaling is mediated via effector proteins, such as adenylate cyclase. Inhibits adenylate cyclase activity of ADCY1, ADCY5 and ADCY6, leading to decreased intracellular cAMP levels. The inactive GDP-bound form prevents the association of RGS14 with centrosomes and is required for the translocation of RGS14 from the cytoplasm to the plasma membrane. Required for normal cytokinesis during mitosis. Required for cortical dynein-dynactin complex recruitment during metaphase. The protein is Guanine nucleotide-binding protein G(i) subunit alpha-1 (GNAI1) of Bos taurus (Bovine).